The sequence spans 574 residues: Envelope glycoprotein (574 aa).

The N-terminal stretch at 1-22 (MTLKDIPFWRVLLIFQTARVYA) is a signal peptide. Topologically, residues 23–514 (GFGDPREAIT…TGLHGLLPYL (492 aa)) are extracellular. N117 and N233 each carry an N-linked (GlcNAc...) asparagine; by host glycan. Residues 243–246 (CWLC) carry the CXXC motif. Cystine bridges form between C243–C246, C243–C471, and C463–C470. N-linked (GlcNAc...) asparagine; by host glycosylation is found at N260, N267, N288, N298, N312, N318, N327, and N345. Residues 386 to 406 (FIPLLVGLGITTAVSTGTAGL) are fusion peptide. 2 coiled-coil regions span residues 407–457 (GYSI…LLTA) and 467–503 (QEKCCFYANKSGIVRDKIKRLQEDLEKRRKEIIDNPF). Positions 446-462 (LQNRRGLDLLTAEQGGI) are immunosuppression. Residues 463 to 471 (CLALQEKCC) carry the CX6CC motif. The N-linked (GlcNAc...) asparagine; by host glycan is linked to N475. Residues 515-535 (LPLLGPLFCLLLLITFGPLIF) form a helical membrane-spanning segment. The Cytoplasmic segment spans residues 536 to 574 (NKIITFVKQQIDAIQAKPIQVHYHRLEQEDNGGVYLRVS). Residues 558-561 (YHRL) carry the YXXL motif; contains endocytosis signal motif.

In terms of assembly, the mature envelope protein (Env) consists of a trimer of SU-TM heterodimers attached by a labile interchain disulfide bond. Specific enzymatic cleavages in vivo yield mature proteins. Envelope glycoproteins are synthesized as an inactive precursor that is N-glycosylated and processed likely by host cell furin or by a furin-like protease in the Golgi to yield the mature SU and TM proteins. The cleavage site between SU and TM requires the minimal sequence [KR]-X-[KR]-R. The R-peptide is released from the C-terminus of the cytoplasmic tail of the TM protein upon particle formation as a result of proteolytic cleavage by the viral protease. Cleavage of this peptide is required for TM to become fusogenic. Post-translationally, the CXXC motif is highly conserved across a broad range of retroviral envelope proteins. It is thought to participate in the formation of a labile disulfide bond possibly with the CX6CC motif present in the transmembrane protein. Isomerization of the intersubunit disulfide bond to an SU intrachain disulfide bond is thought to occur upon receptor recognition in order to allow membrane fusion.

The protein resides in the virion membrane. Its subcellular location is the host cell membrane. Functionally, the surface protein (SU) attaches the virus to the host cell by binding to its receptor. This interaction triggers the refolding of the transmembrane protein (TM) and is thought to activate its fusogenic potential by unmasking its fusion peptide. Fusion occurs at the host cell plasma membrane. Its function is as follows. The transmembrane protein (TM) acts as a class I viral fusion protein. Under the current model, the protein has at least 3 conformational states: pre-fusion native state, pre-hairpin intermediate state, and post-fusion hairpin state. During viral and target cell membrane fusion, the coiled coil regions (heptad repeats) assume a trimer-of-hairpins structure, positioning the fusion peptide in close proximity to the C-terminal region of the ectodomain. The formation of this structure appears to drive apposition and subsequent fusion of viral and target cell membranes. Membranes fusion leads to delivery of the nucleocapsid into the cytoplasm. The chain is Envelope glycoprotein (env) from Macaca mulatta (Rhesus macaque).